Reading from the N-terminus, the 1043-residue chain is Constitutive coactivator of PPAR-gamma-like protein 1 homolog (1043 aa).

Disordered regions lie at residues 353–497 (SMVP…HMQI) and 929–1043 (YGRG…NKEE). Polar residues-rich tracts occupy residues 362–375 (QMLN…QSRP) and 405–419 (SPIN…NHVD). 2 stretches are compositionally biased toward basic and acidic residues: residues 451–471 (TWDK…EQAK) and 951–964 (EVAK…EDSK). An RNA binding region spans residues 801-1043 (VELATKVEKM…LEGAVANKEE (243 aa)). Residues 995-1010 (EARASSNSESALSSDS) are compositionally biased toward low complexity.

This sequence belongs to the constitutive coactivator of PPAR-gamma family.

It is found in the cytoplasm. The protein resides in the cell membrane. Functionally, may bee involved in the oxidative stress-induced survival signaling. Binds RNA. May participate in mRNA transport in the cytoplasm. The protein is Constitutive coactivator of PPAR-gamma-like protein 1 homolog (fam120a) of Xenopus tropicalis (Western clawed frog).